Reading from the N-terminus, the 302-residue chain is Acetylesterase (302 aa).

Positions 1 to 21 are cleaved as a signal peptide; that stretch reads MGRFLTTTALALLATGGAATA. Residues Asn-84 and Asn-101 are each glycosylated (N-linked (GlcNAc...) asparagine).

Belongs to the carbohydrate esterase CE16 family.

Its subcellular location is the secreted. It carries out the reaction an acetyl ester + H2O = an aliphatic alcohol + acetate + H(+). Acetyl esterase that acts as an exo-deacetylase. Liberates acetic acid from xylo-oligomers. The sequence is that of Acetylesterase from Thermothelomyces thermophilus (Myceliophthora thermophila).